Reading from the N-terminus, the 208-residue chain is Inactive ribonuclease-like protein 10 (208 aa).

Positions 1-24 (MKVTLVHLLFMMLLLLLGLGLGLG) are cleaved as a signal peptide. Residues Asn125 and Asn147 are each glycosylated (N-linked (GlcNAc...) asparagine).

The protein belongs to the pancreatic ribonuclease family. In terms of processing, the N-terminus is blocked. Glycosylated. In terms of tissue distribution, male-specific expression in proximal caput of the epididymis (at protein level).

Its subcellular location is the secreted. In terms of biological role, secreted proximal epididymal protein required for post-testicular sperm maturation and male fertility. May be involved in sperm adhesion to the egg zona pellucida. Does not have ribonuclease activity. This Mus musculus (Mouse) protein is Inactive ribonuclease-like protein 10 (Rnase10).